The following is a 227-amino-acid chain: NADH-quinone oxidoreductase subunit C (227 aa).

Belongs to the complex I 30 kDa subunit family. NDH-1 is composed of 14 different subunits. Subunits NuoB, C, D, E, F, and G constitute the peripheral sector of the complex.

It localises to the cell inner membrane. The enzyme catalyses a quinone + NADH + 5 H(+)(in) = a quinol + NAD(+) + 4 H(+)(out). NDH-1 shuttles electrons from NADH, via FMN and iron-sulfur (Fe-S) centers, to quinones in the respiratory chain. The immediate electron acceptor for the enzyme in this species is believed to be ubiquinone. Couples the redox reaction to proton translocation (for every two electrons transferred, four hydrogen ions are translocated across the cytoplasmic membrane), and thus conserves the redox energy in a proton gradient. The chain is NADH-quinone oxidoreductase subunit C from Coxiella burnetii (strain RSA 331 / Henzerling II).